The chain runs to 424 residues: ATP-dependent RNA helicase WM6 (424 aa).

Residues 1-16 (MADNDDLLDYEDEEQT) are compositionally biased toward acidic residues. The interval 1–27 (MADNDDLLDYEDEEQTETTAVENQEAP) is disordered. A Q motif motif is present at residues 41 to 69 (SGFRDFLLKPEILRAIVDCGFEHPSEVQH). Positions 72-246 (IPQAVLGMDI…KKFMQDPMEV (175 aa)) constitute a Helicase ATP-binding domain. 85-92 (AKSGMGKT) is an ATP binding site. A DECD box motif is present at residues 193–196 (DECD). Residues 258-419 (GLQQHYVNLK…ELPEEIDLST (162 aa)) form the Helicase C-terminal domain.

It belongs to the DEAD box helicase family. DECD subfamily. Component of the spliceosome. Interacts with the exon junction complex.

It localises to the nucleus speckle. It carries out the reaction ATP + H2O = ADP + phosphate + H(+). Functionally, required for mRNA export out of the nucleus. Probable RNA helicase that may regulate entry into mitosis by down-regulating the expression of other genes whose activity may be rate-limiting for entry into mitosis during embryogenesis. Binds to salivary gland chromosomes and modifies position effect variegation. Promotes an open chromatin structure that favors transcription during development by regulating the spread of heterochromatin. The protein is ATP-dependent RNA helicase WM6 (Hel25E) of Drosophila melanogaster (Fruit fly).